Here is a 127-residue protein sequence, read N- to C-terminus: Aspartate 1-decarboxylase (127 aa).

Serine 25 acts as the Schiff-base intermediate with substrate; via pyruvic acid in catalysis. A Pyruvic acid (Ser) modification is found at serine 25. Substrate is bound at residue threonine 57. Tyrosine 58 acts as the Proton donor in catalysis. Substrate is bound at residue 73–75 (GAA).

The protein belongs to the PanD family. In terms of assembly, heterooctamer of four alpha and four beta subunits. Requires pyruvate as cofactor. Is synthesized initially as an inactive proenzyme, which is activated by self-cleavage at a specific serine bond to produce a beta-subunit with a hydroxyl group at its C-terminus and an alpha-subunit with a pyruvoyl group at its N-terminus.

It localises to the cytoplasm. It catalyses the reaction L-aspartate + H(+) = beta-alanine + CO2. Its pathway is cofactor biosynthesis; (R)-pantothenate biosynthesis; beta-alanine from L-aspartate: step 1/1. In terms of biological role, catalyzes the pyruvoyl-dependent decarboxylation of aspartate to produce beta-alanine. The sequence is that of Aspartate 1-decarboxylase from Staphylococcus aureus (strain bovine RF122 / ET3-1).